A 103-amino-acid polypeptide reads, in one-letter code: Large ribosomal subunit protein bL21 (103 aa).

This sequence belongs to the bacterial ribosomal protein bL21 family. Part of the 50S ribosomal subunit. Contacts protein L20.

This protein binds to 23S rRNA in the presence of protein L20. This Vibrio parahaemolyticus serotype O3:K6 (strain RIMD 2210633) protein is Large ribosomal subunit protein bL21.